Here is a 790-residue protein sequence, read N- to C-terminus: Cadherin-6 (790 aa).

Positions 1-18 (MRTYRYFLLLFWVGQPYP) are cleaved as a signal peptide. A propeptide spanning residues 19 to 53 (TFSTPLSKRTSGFPAKKRTLELSGNSKNELSRSKR) is cleaved from the precursor. Cadherin domains lie at 54–159 (SWMW…EPIF), 160–268 (TKEV…PPRF), 269–383 (PQST…PPVF), 384–486 (SKLA…DNPP), and 487–608 (EFAE…LVHP). Over 54–615 (SWMWNQFFLL…VHPTGLSTGA (562 aa)) the chain is Extracellular. Asn255 carries an N-linked (GlcNAc...) asparagine glycan. The interval 261 to 291 (VNDNPPRFPQSTYQFKTPESSPPGTPIGRIK) is disordered. Polar residues predominate over residues 269–279 (PQSTYQFKTPE). 4 N-linked (GlcNAc...) asparagine glycosylation sites follow: Asn399, Asn437, Asn455, and Asn536. Residues 616–636 (LIAILLCIVTLLVTVVLFAAL) traverse the membrane as a helical segment. Residues 637 to 790 (RRQRKKEPLI…YGGVDSDKDS (154 aa)) lie on the Cytoplasmic side of the membrane. A phosphoserine mark is found at Ser786 and Ser790.

It localises to the cell membrane. Its function is as follows. Cadherins are calcium-dependent cell adhesion proteins. They preferentially interact with themselves in a homophilic manner in connecting cells; cadherins may thus contribute to the sorting of heterogeneous cell types. The protein is Cadherin-6 (CDH6) of Bos taurus (Bovine).